Reading from the N-terminus, the 172-residue chain is C-phycocyanin beta chain (172 aa).

N4-methylasparagine is present on asparagine 72. (2R,3E)-phycocyanobilin is bound by residues cysteine 82 and cysteine 153.

It belongs to the phycobiliprotein family. In terms of assembly, heterodimer of an alpha and a beta subunit, which further assembles into trimers and the trimers into hexamers. The basic functional unit of phycobiliproteins is a ring-shaped hexamer formed from two back-to-back trimers contacting via the alpha chain subunits. The trimers are composed of alpha/beta subunit heterodimers arranged around a three-fold axis of symmetry. The phycoerythrins also contain a gamma subunit which is located in the center of the hexamer. Contains two covalently linked bilin chromophores.

Its subcellular location is the plastid. It localises to the chloroplast thylakoid membrane. Light-harvesting photosynthetic bile pigment-protein from the phycobiliprotein complex (phycobilisome, PBS). Phycocyanin is the major phycobiliprotein in the PBS rod. The sequence is that of C-phycocyanin beta chain (cpcB) from Pyropia haitanensis (Red seaweed).